Here is a 319-residue protein sequence, read N- to C-terminus: Beta-ketoacyl-[acyl-carrier-protein] synthase III (319 aa).

Residues cysteine 113 and histidine 246 contribute to the active site. The ACP-binding stretch occupies residues 247 to 251; sequence QANIR. The active site involves asparagine 276.

It belongs to the thiolase-like superfamily. FabH family. In terms of assembly, homodimer.

The protein localises to the cytoplasm. It catalyses the reaction malonyl-[ACP] + acetyl-CoA + H(+) = 3-oxobutanoyl-[ACP] + CO2 + CoA. It functions in the pathway lipid metabolism; fatty acid biosynthesis. Its function is as follows. Catalyzes the condensation reaction of fatty acid synthesis by the addition to an acyl acceptor of two carbons from malonyl-ACP. Catalyzes the first condensation reaction which initiates fatty acid synthesis and may therefore play a role in governing the total rate of fatty acid production. Possesses both acetoacetyl-ACP synthase and acetyl transacylase activities. Its substrate specificity determines the biosynthesis of branched-chain and/or straight-chain of fatty acids. The polypeptide is Beta-ketoacyl-[acyl-carrier-protein] synthase III (Ehrlichia ruminantium (strain Welgevonden)).